The chain runs to 224 residues: Urease accessory protein UreF (224 aa).

It belongs to the UreF family. In terms of assembly, ureD, UreF and UreG form a complex that acts as a GTP-hydrolysis-dependent molecular chaperone, activating the urease apoprotein by helping to assemble the nickel containing metallocenter of UreC. The UreE protein probably delivers the nickel.

The protein localises to the cytoplasm. Its function is as follows. Required for maturation of urease via the functional incorporation of the urease nickel metallocenter. The polypeptide is Urease accessory protein UreF (Nitrosococcus oceani (strain ATCC 19707 / BCRC 17464 / JCM 30415 / NCIMB 11848 / C-107)).